Consider the following 355-residue polypeptide: Homeotic protein knotted-1 (355 aa).

Residues 205-233 are disordered; it reads KCEGVGSSEEDQDNSGGETELPEIDPRAE. The region spanning 236–256 is the ELK domain; the sequence is ELKNHLLRKYSGYLSSLKQEL. A DNA-binding region (homeobox; TALE-type) is located at residues 257–320; it reads SKKKKKGKLP…NQRKRHWKPS (64 aa).

Belongs to the TALE/KNOX homeobox family. Expressed in the apical meristems, in the newly emerged lateral primordia in the floral bud, in their vascular bundles and in the cortex parenchyma of the floral pedicle. Also present in the lateral tips of leaf primordia.

Its subcellular location is the nucleus. In terms of biological role, appears to be involved in meristem formation and in the regulation of leaf morphology. Misexpression makes the leaf more compound which is always associated with growth retardation and loss of apical dominance, resulting in dwarfed, bushy plants. Probably binds to the DNA sequence 5'-TGAC-3'. The chain is Homeotic protein knotted-1 (KN1) from Solanum lycopersicum (Tomato).